We begin with the raw amino-acid sequence, 348 residues long: MQSPTNGVSTPKDFSSARRSIQFQNTGFPQIGLASARRHTPFHHAPSKRRIPQTSPLSETVDPLKIALLLSKQWTLYSVTPMHKFSYTNLKEYARLLSAHICAEKQKGLAVEVGTELNVKATFSPLPGLKGREQDPGSILIQVLAKPQFSAAGAQDRIVWSGCFCCTFADEDTLDLLTSETLLCLPLFLVNGAEALTAMVGTWFQKAFDCSFSNLPISSRDLAWMAAMWTGYEAHEHITATEFIFSVPIEPHMDISYAIHPEDIKALWSNIHKGQDEVLAEEVDLLFQCLYTHFFRHFKIHLSATHLVKVSTSVASAHCDGKVKFLSKEYLLQVLGYLTELAINNIQY.

This sequence belongs to the CENP-L/IML3 family.

The protein localises to the nucleus. It localises to the chromosome. Its subcellular location is the centromere. Its function is as follows. Probable component of a centromeric complex involved in assembly of kinetochore proteins, mitotic progression and chromosome segregation. The polypeptide is Centromere protein L (cenpl) (Xenopus tropicalis (Western clawed frog)).